The primary structure comprises 95 residues: Protein TusB (95 aa).

The protein belongs to the DsrH/TusB family. As to quaternary structure, heterohexamer, formed by a dimer of trimers. The hexameric TusBCD complex contains 2 copies each of TusB, TusC and TusD. The TusBCD complex interacts with TusE.

The protein resides in the cytoplasm. In terms of biological role, part of a sulfur-relay system required for 2-thiolation of 5-methylaminomethyl-2-thiouridine (mnm(5)s(2)U) at tRNA wobble positions. The chain is Protein TusB from Yersinia pseudotuberculosis serotype O:1b (strain IP 31758).